The sequence spans 76 residues: MKFALFSVLVLMLIATFVAADDCPRICTADYTPVCGTPSGGRRSANRTFANQCGLDSHNCLNKGATYDKLHDGECK.

A signal peptide spans 1–21 (MKFALFSVLVLMLIATFVAAD). A Kazal-like domain is found at 22–76 (DCPRICTADYTPVCGTPSGGRRSANRTFANQCGLDSHNCLNKGATYDKLHDGECK). 3 cysteine pairs are disulfide-bonded: Cys-23–Cys-60, Cys-27–Cys-53, and Cys-35–Cys-75.

Expressed by the salivary gland.

It is found in the secreted. In terms of biological role, vasodilator protein that inhibits vasoconstriction of isolated rat femoral artery induced by phenylephrine. Since platelet aggregation and vasoconstriction are key hemostatic responses, particularly in small wounds, this protein likely participates in the antihemostatic responses during blood feeding. Blocks L-type calcium channels (Cav1/CACNA1) in left ventricular myocytes isolated from rat hearts. The polypeptide is Vasotab-TY2 (Tabanus yao (Horsefly)).